Here is a 371-residue protein sequence, read N- to C-terminus: Aspartate-semialdehyde dehydrogenase (371 aa).

NADP(+) is bound by residues arginine 9 to valine 12, threonine 37 to serine 38, and glutamine 73. Residue arginine 102 coordinates phosphate. Cysteine 135 (acyl-thioester intermediate) is an active-site residue. Residue glutamine 162 coordinates substrate. Residues serine 165 to glycine 166 and proline 193 each bind NADP(+). Glutamate 241 contributes to the substrate binding site. Lysine 244 is a phosphate binding site. Arginine 268 contacts substrate. Catalysis depends on histidine 275, which acts as the Proton acceptor. Residue glutamine 351 coordinates NADP(+).

This sequence belongs to the aspartate-semialdehyde dehydrogenase family. Homodimer.

The enzyme catalyses L-aspartate 4-semialdehyde + phosphate + NADP(+) = 4-phospho-L-aspartate + NADPH + H(+). The protein operates within amino-acid biosynthesis; L-lysine biosynthesis via DAP pathway; (S)-tetrahydrodipicolinate from L-aspartate: step 2/4. Its pathway is amino-acid biosynthesis; L-methionine biosynthesis via de novo pathway; L-homoserine from L-aspartate: step 2/3. It participates in amino-acid biosynthesis; L-threonine biosynthesis; L-threonine from L-aspartate: step 2/5. Functionally, catalyzes the NADPH-dependent formation of L-aspartate-semialdehyde (L-ASA) by the reductive dephosphorylation of L-aspartyl-4-phosphate. The sequence is that of Aspartate-semialdehyde dehydrogenase from Neisseria meningitidis serogroup A / serotype 4A (strain DSM 15465 / Z2491).